A 233-amino-acid polypeptide reads, in one-letter code: MEPGVAARVAAVADPVLQGMGYRLVRIRISGESGCTVQVMAERPDGTMQIEDCEAVSRALSPVLDIADPIDRAYRLEISSPGIDRPLVRRSDFERHVGHLVKIEMAVAYQNRKRFRGIIKGVEGDGVRITRDDVAKDADPDVVLPMADIGDAKMVLTDELIAESMRRGKAAEREKKRDLGLAPPLAPHAKPAAQAKPKPKAKDGKPAKKPLPTDTKKHRLAADRARRGEIDPD.

The span at 167-179 shows a compositional bias: basic and acidic residues; that stretch reads RGKAAEREKKRDL. The disordered stretch occupies residues 167 to 233; it reads RGKAAEREKK…RARRGEIDPD (67 aa). Residues 187-196 show a composition bias toward low complexity; it reads PHAKPAAQAK. Over residues 220-233 the composition is skewed to basic and acidic residues; the sequence is LAADRARRGEIDPD.

It belongs to the RimP family.

The protein resides in the cytoplasm. In terms of biological role, required for maturation of 30S ribosomal subunits. The protein is Ribosome maturation factor RimP of Bradyrhizobium sp. (strain ORS 278).